The chain runs to 124 residues: Fluoride-specific ion channel FluC (124 aa).

The next 4 helical transmembrane spans lie at 4-24 (LLLV…ISIF), 35-55 (FGTL…YALG), 60-80 (ISPE…TTFS), and 102-122 (VVLN…LVFS). The Na(+) site is built by Gly-74 and Thr-77.

Belongs to the fluoride channel Fluc/FEX (TC 1.A.43) family.

The protein resides in the cell inner membrane. It carries out the reaction fluoride(in) = fluoride(out). Its activity is regulated as follows. Na(+) is not transported, but it plays an essential structural role and its presence is essential for fluoride channel function. Functionally, fluoride-specific ion channel. Important for reducing fluoride concentration in the cell, thus reducing its toxicity. The polypeptide is Fluoride-specific ion channel FluC (Shewanella sp. (strain ANA-3)).